The following is a 105-amino-acid chain: MKAVITLLFLACILVVTYGDLICGTNYCKDHPCTSPIARASCRSPATYRANHSGKCACCPACVTLLRERAACKTYSKEIGETPSAVCQEPLKCLNGVCTKVTPRR.

An N-terminal signal peptide occupies residues 1-19 (MKAVITLLFLACILVVTYG). 6 disulfides stabilise this stretch: cysteine 23–cysteine 56, cysteine 28–cysteine 58, cysteine 33–cysteine 59, cysteine 42–cysteine 62, cysteine 72–cysteine 93, and cysteine 87–cysteine 98.

Functionally, inhibits proteases from the fungi A.oryzae and R.oryzae, trypsin and chymotrypsin. Does not inhibit protease from the bacterium B.licheniformis or papain. In Antheraea mylitta (Tasar silkworm), this protein is Fungal protease inhibitor-1.